A 270-amino-acid polypeptide reads, in one-letter code: Phospholysine phosphohistidine inorganic pyrophosphate phosphatase (270 aa).

Asp17 and Ser19 together coordinate Mg(2+). Residues 17-19 (DIS), 54-55 (TN), and Lys189 each bind substrate. Asp214 lines the Mg(2+) pocket.

Belongs to the HAD-like hydrolase superfamily. Homodimer. It depends on Mg(2+) as a cofactor.

Its subcellular location is the cytoplasm. The protein localises to the nucleus. The catalysed reaction is diphosphate + H2O = 2 phosphate + H(+). Its function is as follows. Phosphatase that hydrolyzes imidodiphosphate, 3-phosphohistidine and 6-phospholysine. Has broad substrate specificity and can also hydrolyze inorganic diphosphate, but with lower efficiency. The protein is Phospholysine phosphohistidine inorganic pyrophosphate phosphatase (Lhpp) of Mus musculus (Mouse).